An 843-amino-acid polypeptide reads, in one-letter code: Protein translocase subunit SecA (843 aa).

Residues Gln91, 109–113 (GEGKT), and Asp498 contribute to the ATP site. Positions 796–825 (DFGKAEHVSAEDGKEKAKAEPYVKDEHIGR) are enriched in basic and acidic residues. The disordered stretch occupies residues 796 to 833 (DFGKAEHVSAEDGKEKAKAEPYVKDEHIGRNDPCPCGS). The Zn(2+) site is built by Cys829, Cys831, Cys840, and His841.

Belongs to the SecA family. Monomer and homodimer. Part of the essential Sec protein translocation apparatus which comprises SecA, SecYEG and auxiliary proteins SecDF. Other proteins may also be involved. Zn(2+) serves as cofactor.

It is found in the cell membrane. It localises to the cytoplasm. The enzyme catalyses ATP + H2O + cellular proteinSide 1 = ADP + phosphate + cellular proteinSide 2.. Part of the Sec protein translocase complex. Interacts with the SecYEG preprotein conducting channel. Has a central role in coupling the hydrolysis of ATP to the transfer of proteins into and across the cell membrane, serving as an ATP-driven molecular motor driving the stepwise translocation of polypeptide chains across the membrane. The polypeptide is Protein translocase subunit SecA (Staphylococcus saprophyticus subsp. saprophyticus (strain ATCC 15305 / DSM 20229 / NCIMB 8711 / NCTC 7292 / S-41)).